Reading from the N-terminus, the 452-residue chain is Caspase-2 (452 aa).

At Ala-2 the chain carries N-acetylalanine. Residues 2-169 (AAPSAGSWST…TVEHSLDNKD (168 aa)) constitute a propeptide that is removed on maturation. A CARD domain is found at 32-121 (MHPHHQETLK…GHLEDMLLTT (90 aa)). Ser-157 is subject to Phosphoserine. Residues His-277 and Cys-320 contribute to the active site. Positions 326-333 (DRGVDQQD) are excised as a propeptide. Positions 327 to 336 (RGVDQQDGKN) are enriched in basic and acidic residues. The segment at 327-354 (RGVDQQDGKNHAGSPGCEESDAGKEKLP) is disordered. Position 340 is a phosphoserine (Ser-340).

This sequence belongs to the peptidase C14A family. Heterotetramer that consists of two anti-parallel arranged heterodimers, each one formed by a p18 subunit and a p12 subunit. Forms a complex named the PIDDosome with PIDD1 and CRADD. Interacts with NOL3 (via CARD domain); inhibits CASP2 activity in a phosphorylation-dependent manner. In terms of processing, the mature protease can process its own propeptide, but not that of other caspases. As to expression, expressed at higher levels in the embryonic lung, liver and kidney than in the heart and brain. In adults, higher level expression is seen in the placenta, lung, kidney, and pancreas than in the heart, brain, liver and skeletal muscle.

It carries out the reaction Strict requirement for an Asp residue at P1, with 316-Asp being essential for proteolytic activity and has a preferred cleavage sequence of Val-Asp-Val-Ala-Asp-|-.. Functionally, is a regulator of the cascade of caspases responsible for apoptosis execution. Might function by either activating some proteins required for cell death or inactivating proteins necessary for cell survival. Associates with PIDD1 and CRADD to form the PIDDosome, a complex that activates CASP2 and triggers apoptosis in response to genotoxic stress. In terms of biological role, acts as a positive regulator of apoptosis. Acts as a negative regulator of apoptosis. Its function is as follows. May function as an endogenous apoptosis inhibitor that antagonizes caspase activation and cell death. The polypeptide is Caspase-2 (CASP2) (Homo sapiens (Human)).